Here is a 270-residue protein sequence, read N- to C-terminus: Putative phosphoenolpyruvate synthase regulatory protein (270 aa).

Position 150-157 (G150–T157) interacts with ADP.

It belongs to the pyruvate, phosphate/water dikinase regulatory protein family. PSRP subfamily.

The catalysed reaction is [pyruvate, water dikinase] + ADP = [pyruvate, water dikinase]-phosphate + AMP + H(+). It catalyses the reaction [pyruvate, water dikinase]-phosphate + phosphate + H(+) = [pyruvate, water dikinase] + diphosphate. Its function is as follows. Bifunctional serine/threonine kinase and phosphorylase involved in the regulation of the phosphoenolpyruvate synthase (PEPS) by catalyzing its phosphorylation/dephosphorylation. The sequence is that of Putative phosphoenolpyruvate synthase regulatory protein from Shewanella loihica (strain ATCC BAA-1088 / PV-4).